The chain runs to 279 residues: Tryptophan synthase alpha chain (279 aa).

Catalysis depends on proton acceptor residues glutamate 50 and aspartate 61.

Belongs to the TrpA family. In terms of assembly, tetramer of two alpha and two beta chains.

It catalyses the reaction (1S,2R)-1-C-(indol-3-yl)glycerol 3-phosphate + L-serine = D-glyceraldehyde 3-phosphate + L-tryptophan + H2O. It participates in amino-acid biosynthesis; L-tryptophan biosynthesis; L-tryptophan from chorismate: step 5/5. Its function is as follows. The alpha subunit is responsible for the aldol cleavage of indoleglycerol phosphate to indole and glyceraldehyde 3-phosphate. This chain is Tryptophan synthase alpha chain, found in Rhizobium johnstonii (strain DSM 114642 / LMG 32736 / 3841) (Rhizobium leguminosarum bv. viciae).